The following is a 335-amino-acid chain: 3-hydroxy-3-methylglutaryl-CoA lyase, cytoplasmic (335 aa).

Residue G2 is the site of N-myristoyl glycine attachment. The region spanning 43 to 310 is the Pyruvate carboxyltransferase domain; the sequence is VKIVEVGPRD…ETGVDLLKVM (268 aa). R51 provides a ligand contact to substrate. Position 52 (D52) interacts with a divalent metal cation. K58 is modified (N6-acetyllysine). A divalent metal cation-binding residues include H243 and H245. Residue C276 is part of the active site. N285 lines the a divalent metal cation pocket.

Belongs to the HMG-CoA lyase family. It depends on a divalent metal cation as a cofactor.

The protein resides in the cytoplasm. It localises to the cytosol. It is found in the endoplasmic reticulum membrane. It catalyses the reaction (3S)-3-hydroxy-3-methylglutaryl-CoA = acetoacetate + acetyl-CoA. It functions in the pathway metabolic intermediate metabolism; (S)-3-hydroxy-3-methylglutaryl-CoA degradation; acetoacetate from (S)-3-hydroxy-3-methylglutaryl-CoA: step 1/1. Its function is as follows. Non-mitochondrial 3-hydroxy-3-methylglutaryl-CoA lyase that catalyzes a cation-dependent cleavage of (S)-3-hydroxy-3-methylglutaryl-CoA into acetyl-CoA and acetoacetate, a key step in ketogenesis, the products of which support energy production in nonhepatic animal tissues. The protein is 3-hydroxy-3-methylglutaryl-CoA lyase, cytoplasmic (hmgcll1) of Danio rerio (Zebrafish).